Here is a 543-residue protein sequence, read N- to C-terminus: Zinc finger CCCH-type with G patch domain-containing protein (543 aa).

Disordered regions lie at residues 55 to 79 (AATS…DNPI) and 95 to 132 (TEDS…DKLD). Low complexity predominate over residues 65–76 (DTAGRAPPATAD). A compositionally biased stretch (acidic residues) spans 118-131 (DDDADNDDDADDKL). Residues 186–209 (PCAYFLEGECRFTDEKCRYSHGEV) form a C3H1-type zinc finger. Residues 272–304 (PFEDLLPLDEDEDGQEAAEDSESDTDGADEEEA) are disordered. Acidic residues predominate over residues 277 to 304 (LPLDEDEDGQEAAEDSESDTDGADEEEA). One can recognise a G-patch domain in the interval 335–381 (TRGIGSKIMQKMGYIVGTGLGREGEGIVVPVSAQVLPQGRSLDYCME). Residues 438–460 (GAAGGESSRPNRNRPGALSRQEL) are disordered.

It is found in the nucleus. Functionally, transcription repressor. This is Zinc finger CCCH-type with G patch domain-containing protein from Anopheles gambiae (African malaria mosquito).